The chain runs to 593 residues: Salivary alpha-glucosidase (593 aa).

A signal peptide spans 1 to 19; sequence MPPLGVLLLLVALGHSTQG. Ca(2+) contacts are provided by Asp-49, Asp-51, Asp-53, Ile-55, Asp-57, and Asn-130. Asn-130 and Asn-163 each carry an N-linked (GlcNAc...) asparagine glycan. Asp-201, Tyr-235, Leu-236, and Glu-238 together coordinate Ca(2+). N-linked (GlcNAc...) asparagine glycans are attached at residues Asn-295, Asn-310, Asn-338, Asn-414, Asn-445, and Asn-453. Asn-338 is an N-acetyl-beta-D-glucosamine binding site.

This sequence belongs to the glycosyl hydrolase 13 family. Saliva (at protein level). Proximal lateral lobes of the salivary gland (at protein level).

It localises to the secreted. The catalysed reaction is Hydrolysis of terminal, non-reducing (1-&gt;4)-linked alpha-D-glucose residues with release of alpha-D-glucose.. Functionally, functions as a glucosidase that shows high activity toward sucrose, a major component of nectar. Assists the mosquito in its sugar-feeding capabilities. The sequence is that of Salivary alpha-glucosidase from Anopheles gambiae (African malaria mosquito).